The sequence spans 598 residues: Proline--tRNA ligase (598 aa).

The protein belongs to the class-II aminoacyl-tRNA synthetase family. ProS type 1 subfamily. As to quaternary structure, homodimer.

The protein localises to the cytoplasm. The catalysed reaction is tRNA(Pro) + L-proline + ATP = L-prolyl-tRNA(Pro) + AMP + diphosphate. Catalyzes the attachment of proline to tRNA(Pro) in a two-step reaction: proline is first activated by ATP to form Pro-AMP and then transferred to the acceptor end of tRNA(Pro). As ProRS can inadvertently accommodate and process non-cognate amino acids such as alanine and cysteine, to avoid such errors it has two additional distinct editing activities against alanine. One activity is designated as 'pretransfer' editing and involves the tRNA(Pro)-independent hydrolysis of activated Ala-AMP. The other activity is designated 'posttransfer' editing and involves deacylation of mischarged Ala-tRNA(Pro). The misacylated Cys-tRNA(Pro) is not edited by ProRS. In Synechococcus sp. (strain CC9311), this protein is Proline--tRNA ligase.